A 137-amino-acid polypeptide reads, in one-letter code: Large ribosomal subunit protein uL16 (137 aa).

The interval 1-20 (MLQPKRTKFRKQQKMRNRGL) is disordered.

Belongs to the universal ribosomal protein uL16 family. In terms of assembly, part of the 50S ribosomal subunit.

In terms of biological role, binds 23S rRNA and is also seen to make contacts with the A and possibly P site tRNAs. The polypeptide is Large ribosomal subunit protein uL16 (Francisella philomiragia subsp. philomiragia (strain ATCC 25017 / CCUG 19701 / FSC 153 / O#319-036)).